A 139-amino-acid polypeptide reads, in one-letter code: Large ribosomal subunit protein uL16 (139 aa).

It belongs to the universal ribosomal protein uL16 family. In terms of assembly, part of the 50S ribosomal subunit.

Functionally, binds 23S rRNA and is also seen to make contacts with the A and possibly P site tRNAs. This chain is Large ribosomal subunit protein uL16, found in Mycoplasma pneumoniae (strain ATCC 29342 / M129 / Subtype 1) (Mycoplasmoides pneumoniae).